The primary structure comprises 141 residues: Large ribosomal subunit protein uL16 (141 aa).

Residues 1-23 (MLMPKRTKYRKQMKGRNRGKAHR) form a disordered region.

The protein belongs to the universal ribosomal protein uL16 family. Part of the 50S ribosomal subunit.

Its function is as follows. Binds 23S rRNA and is also seen to make contacts with the A and possibly P site tRNAs. The sequence is that of Large ribosomal subunit protein uL16 from Helicobacter pylori (strain P12).